An 868-amino-acid chain; its full sequence is Translation initiation factor IF-2 (868 aa).

Residues 199–209 (SKKEEVKPEKV) show a composition bias toward basic and acidic residues. The segment at 199 to 269 (SKKEEVKPEK…GTEKSDKYRE (71 aa)) is disordered. Positions 249–260 (RGGRSKFKKKKG) are enriched in basic residues. Residues 368–537 (GRAPVVTIMG…LLQSEVLELK (170 aa)) form the tr-type G domain. The interval 377–384 (GHVDHGKT) is G1. 377–384 (GHVDHGKT) lines the GTP pocket. The tract at residues 402 to 406 (GITQH) is G2. The G3 stretch occupies residues 423–426 (DTPG). GTP-binding positions include 423–427 (DTPGH) and 477–480 (NKMD). The interval 477–480 (NKMD) is G4. Residues 513–515 (SAK) are G5.

It belongs to the TRAFAC class translation factor GTPase superfamily. Classic translation factor GTPase family. IF-2 subfamily.

Its subcellular location is the cytoplasm. In terms of biological role, one of the essential components for the initiation of protein synthesis. Protects formylmethionyl-tRNA from spontaneous hydrolysis and promotes its binding to the 30S ribosomal subunits. Also involved in the hydrolysis of GTP during the formation of the 70S ribosomal complex. The chain is Translation initiation factor IF-2 from Legionella pneumophila (strain Paris).